A 125-amino-acid chain; its full sequence is Small ribosomal subunit protein bS6 (125 aa).

The segment at 99-125 (ASPMVKAREERKPLTEVENNDFEDAEE) is disordered. Basic and acidic residues predominate over residues 104-113 (KAREERKPLT). Over residues 116-125 (ENNDFEDAEE) the composition is skewed to acidic residues.

The protein belongs to the bacterial ribosomal protein bS6 family.

Functionally, binds together with bS18 to 16S ribosomal RNA. In Histophilus somni (strain 2336) (Haemophilus somnus), this protein is Small ribosomal subunit protein bS6.